The sequence spans 758 residues: Spastin (758 aa).

Residues 1–99 (MVRTKNQSSS…PTTCSPRSGH (99 aa)) form a disordered region. The Cytoplasmic segment spans residues 1 to 121 (MVRTKNQSSS…KQNLYVVSFP (121 aa)). The interval 1–210 (MVRTKNQSSS…RPIQPLEMAA (210 aa)) is required for localization to punctate cytoplasmic foci. Composition is skewed to low complexity over residues 8 to 29 (SSSS…SATG), 43 to 58 (RSSS…AGGS), 66 to 76 (SSNRRSPGSSP), and 85 to 95 (TDDLTPTTCSP). An intramembrane region (helical) is located at residues 122-142 (IIFLFNVLRSLIYQLFCIFRY). The Cytoplasmic portion of the chain corresponds to 143-758 (LYGASTKVIY…WSQDYGDITI (616 aa)). Composition is skewed to polar residues over residues 169–180 (SKEQQQSLNHPS) and 189–198 (QEQQLSNQPQ). Residues 169 to 221 (SKEQQQSLNHPSELNRDSDGQEQQLSNQPQRFRPIQPLEMAANRPGGGYSPGP) form a disordered region. A sufficient for interaction with microtubules and microtubule severing region spans residues 208 to 758 (MAANRPGGGY…WSQDYGDITI (551 aa)). Positions 233 to 308 (HRRAFEYISK…SMARDRLHFL (76 aa)) constitute an MIT domain. Disordered regions lie at residues 353 to 376 (RVRS…GRKL) and 390 to 454 (NKSQ…ASTP). Polar residues-rich tracts occupy residues 390–406 (NKSQ…TSVG) and 425–454 (QFSS…ASTP). Residues 443-455 (NNGPSGSGASTPV) are required for interaction with microtubules. 523–530 (GPPGNGKT) provides a ligand contact to ATP.

It belongs to the AAA ATPase family. Spastin subfamily. In terms of assembly, homohexamer. The homohexamer is stabilized by ATP-binding. The homohexamer may adopt a ring conformation through which microtubules pass prior to being severed. Interacts with microtubules. Interacts with atl; may be involved in microtubule dynamics.

It localises to the membrane. The protein resides in the cytoplasm. It is found in the cytoskeleton. The protein localises to the microtubule organizing center. Its subcellular location is the centrosome. It localises to the chromosome. The protein resides in the lipid droplet. The catalysed reaction is n ATP + n H2O + a microtubule = n ADP + n phosphate + (n+1) alpha/beta tubulin heterodimers.. ATP-dependent microtubule severing protein. Stimulates microtubule minus-end depolymerization and poleward microtubule flux in the mitotic spindle. Regulates microtubule stability in the neuromuscular junction synapse. Involved in lipid metabolism by regulating the size and distribution of lipid droplets. Involved in axon regeneration by regulating microtubule severing. The polypeptide is Spastin (Drosophila yakuba (Fruit fly)).